We begin with the raw amino-acid sequence, 421 residues long: WD repeat and SOCS box-containing protein 1 (421 aa).

WD repeat units follow at residues 32 to 71 (KCGRENWTVAFAPDGSYFAWSQGHRTVKLVPWSQCLQNFL), 124 to 165 (SRCV…LLLN), 168 to 208 (DHTE…NMMK), 212 to 251 (GHQNWVYSCAFSPDSSMLCSVGASKAVFLWNMDKYTMIRK), 254 to 293 (GHHHDVVACDFSPDGALLATASYDTRVYIWDPHNGDILME), and 309 to 346 (ANDRWVRSVSFSHDGLHVASLADDKMVRFWRIDEDYPV). The region spanning 372 to 421 (DGSVYFWATPRQVPSLQHLCRMSIRRVMPTQEVQELPIPSKLLEFLSYRI) is the SOCS box domain.

Interacts with DIO2. Component of the probable ECS(WSB1) E3 ubiquitin ligase complex which contains CUL5, RNF7/RBX2, Elongin BC complex and WSB1. Component of a probable ECS-like E3 ubiquitin-protein ligase complex which contains CUL5, RBX1, Elongin BC complex and WSB1. Interacts with CUL5, RNF7, ELOB and ELOC. Binds to HIPK2 through WD40 repeats.

The protein operates within protein modification; protein ubiquitination. In terms of biological role, probable substrate-recognition component of a SCF-like ECS (Elongin-Cullin-SOCS-box protein) E3 ubiquitin ligase complex which mediates the ubiquitination and subsequent proteasomal degradation of target proteins. Recognizes type II iodothyronine deiodinase/DIO2. Confers constitutive instability to HIPK2 through proteasomal degradation. The chain is WD repeat and SOCS box-containing protein 1 (WSB1) from Homo sapiens (Human).